The chain runs to 1102 residues: MDKEIYCGSVPVSYFDPFDLFESLRPEFQQILPLDNIHWKAFDGTVRTVNRLPIELIPEGRGEADKSNDEQPFIRFLIVNCISIDQYRAKVRPLVRQWLPNLESVSSSTGEKMIYKPIILLYANSEVVDSNLFKSVSLMEKFGKDFPHVQTLEVRSVYRSPKERQEFWNQFSQKIKASVLSIFQKRLTHLQHSLANLQKGNNFEEQLLTREKLYELYVVFNILEDASLELQKIKKEILRRNMNMPDGKLQVPFESSSKSDESLGSIIIEGTLDKFQLHKYFFIRRLRLLKLEDQTLTAFVGAFQLIKNFIESISIEYRKSVRLLEFKHYFITSMLSYFEFENVSNPLLCEIKAELLMLKRDNWVQGVMATSGYRLMDKNYPNSDVKYKFDLLKETFVDETVFQENFLTLTKEILSLFNKCEGKRQRIVDILSIEIGLLYYQGKKYEEAVSLFLSCYEYYTQTNWNSIGLKILQVFIDSLSHCPKLDVLQIDGESVSASAVLTNAFLNILKLCKDNDSKEIWWKKFMDLQMKNNIHLMYPLDGLFEVTLNSKVHLARANVSAIEVNLKSYGFPEDISTKTMRLSLKNMGGDVIVFGASDFLLKKGENKLILECRDIMYGEFSLLSFEIIVEGITFVKEFPENQDEFIVVPEIYCKESTKVLVKQAHNLNLGEYALELKSVQSDALESLQVEVEVQKNIGNMKNLPVSFSMDEIQARKRYNTPFENVRLEYYLLDQITAFDLIIKTSFTKKNDQGTFGETKKVRIQCYLQLSVSVEDIFKKDIFFFKFLLNSSVREEPVILYSSELSAPDTRNDYNIRGDYIATTPALITFDGNESFINCYEITANNNFDSKDIFNLKVRYNTLKEQLDCFITDAVLIEGDVEWFILFEKWKTFWELEILKKLKYDYDAFKENRIIRLLKTSIDLNKTKSKIRNLCIEKAVLDKILICLNKVSRGIAVCNTDMDEYVRNLVPKQLTVPVQLPGFEQFFHVQFEQMETSHDALHDTIATIGNSLSYTVIVENLSGQWGQDVIDDGGYIFEILSSNEWLIHGQKRCAIKEKRKEFEVHLIPLKKGYLNFPRVEITNINGKSCRVDHSNAFESILIF.

Belongs to the TMEM1 family. Part of the multisubunit TRAPP (transport protein particle) II complex composed of BET3, BET5, TRS20, TRS23, TRS31, TRS33, TRS65, TRS120 and TRS130. Interacts with YPT31 and YPT32.

It localises to the golgi apparatus. Its function is as follows. Specific subunit of the TRAPP II complex, a highly conserved vesicle tethering complex that functions in the late Golgi as a guanine nucleotide exchange factor (GEF) for the Golgi YPT1 GTPase. TRS130 plays a role in the YPT GEF activity of TRAPP II in concert with the two other TRAPP II-specific subunits TRS65 and TRS120. Required for both the cytoplasm-to-vacuole targeting (Cvt) pathway and starvation-induced autophagy through its role in ATG8 and ATG9 trafficking. The chain is Trafficking protein particle complex II-specific subunit 130 (TRS130) from Saccharomyces cerevisiae (strain ATCC 204508 / S288c) (Baker's yeast).